The primary structure comprises 85 residues: uncharacterized protein (85 aa).

This is an uncharacterized protein from Escherichia coli (strain K12).